Reading from the N-terminus, the 79-residue chain is Large ribosomal subunit protein uL29 (79 aa).

The protein belongs to the universal ribosomal protein uL29 family.

The polypeptide is Large ribosomal subunit protein uL29 (Tropheryma whipplei (strain Twist) (Whipple's bacillus)).